Reading from the N-terminus, the 197-residue chain is RNA polymerase II subunit A C-terminal domain phosphatase ssup-72 (197 aa).

Ser39 carries the post-translational modification Phosphoserine.

Belongs to the SSU72 phosphatase family. As to quaternary structure, may interact with synd-1 (via C-terminus); the interaction may prevent ssup-72 binding to RNA polymerase II ama-1. May interact with RNA polymerase II ama-1. May be phosphorylated by kin-20. In terms of tissue distribution, expressed in epidermis, intestine and nervous system.

It is found in the nucleus. It carries out the reaction O-phospho-L-seryl-[protein] + H2O = L-seryl-[protein] + phosphate. The catalysed reaction is O-phospho-L-threonyl-[protein] + H2O = L-threonyl-[protein] + phosphate. Its function is as follows. Protein phosphatase that dephosphorylates 'Ser-5' of the heptad repeats YSPTSPS in the C-terminal domain of the large RNA polymerase II subunit ama-1. By regulating the phosphorylation status of ama-1 and thus ama-1 binding to specific polyadenylation sites, regulates alternative polyadenylation of pre-mRNAs, including unc-44 and dlk-1 mRNAs. This results in the tissue-specific expression of unc-44 isoforms. In Caenorhabditis elegans, this protein is RNA polymerase II subunit A C-terminal domain phosphatase ssup-72.